A 96-amino-acid chain; its full sequence is Defensin-like protein 151 (96 aa).

The N-terminal stretch at 1–29 is a signal peptide; the sequence is MKKPSQLSATILTIFVILAIGVMVKETLG. 4 cysteine pairs are disulfide-bonded: cysteine 35/cysteine 88, cysteine 48/cysteine 68, cysteine 53/cysteine 82, and cysteine 57/cysteine 84.

Belongs to the DEFL family.

The protein localises to the secreted. In Arabidopsis thaliana (Mouse-ear cress), this protein is Defensin-like protein 151 (LCR17).